The sequence spans 132 residues: Small ribosomal subunit protein uS8 (132 aa).

It belongs to the universal ribosomal protein uS8 family. As to quaternary structure, part of the 30S ribosomal subunit. Contacts proteins S5 and S12.

Functionally, one of the primary rRNA binding proteins, it binds directly to 16S rRNA central domain where it helps coordinate assembly of the platform of the 30S subunit. In Clostridium acetobutylicum (strain ATCC 824 / DSM 792 / JCM 1419 / IAM 19013 / LMG 5710 / NBRC 13948 / NRRL B-527 / VKM B-1787 / 2291 / W), this protein is Small ribosomal subunit protein uS8.